The sequence spans 1464 residues: DNA polymerase III PolC-type (1464 aa).

Positions 426–582 (YVVFDVETTG…YDAEATGRLL (157 aa)) constitute an Exonuclease domain.

It belongs to the DNA polymerase type-C family. PolC subfamily.

It localises to the cytoplasm. It catalyses the reaction DNA(n) + a 2'-deoxyribonucleoside 5'-triphosphate = DNA(n+1) + diphosphate. Required for replicative DNA synthesis. This DNA polymerase also exhibits 3' to 5' exonuclease activity. The protein is DNA polymerase III PolC-type of Streptococcus thermophilus (strain CNRZ 1066).